The following is a 341-amino-acid chain: Geranylfarnesyl diphosphate synthase (341 aa).

Positions 47, 50, and 95 each coordinate isopentenyl diphosphate. Positions 102 and 106 each coordinate Mg(2+). Arginine 111 contributes to the an all-trans-polyprenyl diphosphate binding site. Arginine 112 lines the isopentenyl diphosphate pocket. An all-trans-polyprenyl diphosphate is bound by residues lysine 193, threonine 194, and glutamine 231.

The protein belongs to the FPP/GGPP synthase family. As to quaternary structure, homodimer. Requires Mg(2+) as cofactor.

The protein resides in the cytoplasm. The catalysed reaction is isopentenyl diphosphate + (2E,6E,10E)-geranylgeranyl diphosphate = (2E,6E,10E,14E)-geranylfarnesyl diphosphate + diphosphate. In terms of biological role, probably involved in biosynthesis of the precursor for C25 (sesterterpanyl chain) moiety of C20-C25 diether (2-O-sesterterpanyl-3-O-phytanyl-sn-glycer) membrane lipid. Catalyzes the condensation of isopentenyl pyrophosphate with the allylic pyrophosphates to yield geranylfarnesyl diphosphate (GFPP). Geranylgeranyl diphosphate (GGPP) is the preferred substrate, but dimethylallyl diphosphate (DMAPP) and farnesyl diphosphate (FPP) can also be used as allylic substrate. This chain is Geranylfarnesyl diphosphate synthase (idsA3), found in Natronomonas pharaonis (strain ATCC 35678 / DSM 2160 / CIP 103997 / JCM 8858 / NBRC 14720 / NCIMB 2260 / Gabara) (Halobacterium pharaonis).